Reading from the N-terminus, the 903-residue chain is DNA transposase THAP9 (903 aa).

A THAP-type zinc finger spans residues 1–89 (MTRSCSAVGC…LKKGAVPSVS (89 aa)). An HCFC1-binding motif (HBM) motif is present at residues 123 to 126 (DHNY).

Functionally, active transposase that specifically recognizes the bipartite 5'-TXXGGGX(A/T)-3' consensus motif and mediates transposition. The polypeptide is DNA transposase THAP9 (THAP9) (Homo sapiens (Human)).